Reading from the N-terminus, the 536-residue chain is CRISPR-associated DNA-binding protein Cas12m (536 aa).

Positions 1–59 (MPFGKKARHVKAYQFGADAPQEGMEAVLEQHRLRTDYYNALVEMELRQREERTALLANL) are recognition domain (REC1-N). Residues 60 to 105 (AAESGLESPNQVYERLKAAGEKGIRKHPEYVAARERQKALYGHPRL) form a recognition domain (REC2) region. The tract at residues 106-159 (LELQSRQREERNALRRSFGAKGLYSSNYLDVERAFDKARQSPELRFRRYSPHEG) is recognition domain (REC1-C). The interval 160–257 (RLAVLYTEGL…RWTVSVVVEV (98 aa)) is wedge domain (WED). The segment at 258–270 (EGPPVASPTGRGA) is linker. A ruvC-I region spans residues 271 to 481 (VAVDLGWRRV…QRGKPVRKLN (211 aa)). The segment at 482–516 (PAHTTTDCHACGGALVGDPAKELRLYCPTCERFYD) is target nucleic-acid binding (TNB). Residues C489, C492, C508, and C511 each coordinate Zn(2+). Residues 517–536 (QDENAARNLLRRAQEVQAQV) are ruvC-II. D518 provides a ligand contact to Mg(2+).

The protein belongs to the CRISPR-associated DNA-binding protein Cas12m family. Requires Mg(2+) as cofactor. Zn(2+) serves as cofactor.

Pre-crRNA processing is inhibited by EDTA. In terms of biological role, CRISPR (clustered regularly interspaced short palindromic repeat), is an adaptive immune system that provides protection against mobile genetic elements (viruses, transposable elements and conjugative plasmids). CRISPR clusters contain sequences complementary to antecedent mobile elements and target invading nucleic acids. CRISPR clusters are transcribed and processed into CRISPR RNA (crRNA). Recognizes a short motif in the CRISPR repeat sequences (the 5' PAM or protospacer adjacent motif, 5'-TT/CN-3' in this organism) to help distinguish self versus nonself, as targets within the bacterial CRISPR locus do not have PAMs. Cas12m-crRNA binds DNA in a PAM-dependent, crRNA-guided fashion. DNA-binding probably inhibits transcription, leading to gene silencing. No dsDNA, ssDNA or RNA nuclease activity is seen for the crRNA-Cas12m complex. Upon expression in E.coli as a CRISPR region preferentially binds to its associated crRNA. Is required to process pre-crRNA to mature crRNA without a tracrRNA; processing is Mg(2+)-dependent and does not require the predicted RuvC domain catalytic site. The protein is CRISPR-associated DNA-binding protein Cas12m of Allomeiothermus silvanus (strain ATCC 700542 / DSM 9946 / NBRC 106475 / NCIMB 13440 / VI-R2) (Thermus silvanus).